We begin with the raw amino-acid sequence, 141 residues long: Large ribosomal subunit protein uL11 (141 aa).

It belongs to the universal ribosomal protein uL11 family. In terms of assembly, part of the ribosomal stalk of the 50S ribosomal subunit. Interacts with L10 and the large rRNA to form the base of the stalk. L10 forms an elongated spine to which L12 dimers bind in a sequential fashion forming a multimeric L10(L12)X complex. In terms of processing, one or more lysine residues are methylated.

Its function is as follows. Forms part of the ribosomal stalk which helps the ribosome interact with GTP-bound translation factors. This is Large ribosomal subunit protein uL11 from Clostridium acetobutylicum (strain ATCC 824 / DSM 792 / JCM 1419 / IAM 19013 / LMG 5710 / NBRC 13948 / NRRL B-527 / VKM B-1787 / 2291 / W).